An 821-amino-acid chain; its full sequence is Ribonuclease R (821 aa).

In terms of domain architecture, RNB spans 267–593 (RVDLRALPLV…LLHRAIKYLI (327 aa)). The region spanning 652 to 733 (GEELEGVVAN…DDRQIDFELV (82 aa)) is the S1 motif domain. The interval 739–821 (LRGQGKTAKK…KSGKVRDKTK (83 aa)) is disordered. Basic and acidic residues-rich tracts occupy residues 748–764 (KRAD…KEAA) and 774–794 (TKSE…EGRS). The segment covering 795–814 (KPKKTKAPKKRKDQARKKSG) has biased composition (basic residues).

It belongs to the RNR ribonuclease family. RNase R subfamily.

It is found in the cytoplasm. The catalysed reaction is Exonucleolytic cleavage in the 3'- to 5'-direction to yield nucleoside 5'-phosphates.. In terms of biological role, 3'-5' exoribonuclease that releases 5'-nucleoside monophosphates and is involved in maturation of structured RNAs. The polypeptide is Ribonuclease R (Vibrio cholerae serotype O1 (strain ATCC 39315 / El Tor Inaba N16961)).